Reading from the N-terminus, the 350-residue chain is Protein CONSERVED ONLY IN THE GREEN LINEAGE 160, chloroplastic (350 aa).

The N-terminal 46 residues, 1–46 (MAILSYISATSTTPPIPQDQSPNSRLPTKIILPNKKPEKWSTGVAP), are a transit peptide targeting the chloroplast. Residues 7–26 (ISATSTTPPIPQDQSPNSRL) are compositionally biased toward polar residues. Positions 7–58 (ISATSTTPPIPQDQSPNSRLPTKIILPNKKPEKWSTGVAPGEYGGPPTTTKL) are disordered. Ser117 is modified (phosphoserine). A run of 4 helical transmembrane segments spans residues 213 to 233 (KNKI…SAYI), 239 to 259 (IALS…MLGN), 276 to 296 (ANQP…RWNA), and 304 to 324 (FMHL…IATF).

Its subcellular location is the plastid. The protein resides in the chloroplast thylakoid membrane. Facilitates the assembly of the membrane proton channel of the chloroplastic F-type ATPase. Specifically required for the efficient assembly and integration of the CF(0) subunit c into the chloroplastic ATPase complex in the thylakoid membrane. The chain is Protein CONSERVED ONLY IN THE GREEN LINEAGE 160, chloroplastic from Arabidopsis thaliana (Mouse-ear cress).